The chain runs to 956 residues: MAM domain-containing glycosylphosphatidylinositol anchor protein 2 (956 aa).

Residues 1-25 (MDLLYGLVWLLTVLLEGISGQGVYA) form the signal peptide. 2 Ig-like domains span residues 27 to 127 (PTVR…IRVD) and 134 to 232 (PVVT…KMVS). Disulfide bonds link Cys-62–Cys-110 and Cys-159–Cys-216. Residues Asn-92, Asn-213, and Asn-237 are each glycosylated (N-linked (GlcNAc...) asparagine). Ig-like domains follow at residues 242–328 (PSIK…NIIV), 340–436 (PDPY…VNIS), 442–533 (PNLT…ALVQ), and 540–627 (PAVE…FLVT). Disulfide bonds link Cys-264–Cys-310 and Cys-359–Cys-417. N-linked (GlcNAc...) asparagine glycosylation is found at Asn-434, Asn-443, Asn-504, Asn-610, and Asn-703. 2 disulfide bridges follow: Cys-465–Cys-515 and Cys-561–Cys-611. A Fibronectin type-III domain is found at 638–739 (DTYNPVWQNR…IRVIKYSAPV (102 aa)). The 176-residue stretch at 746–921 (FHCGFEDGNI…VSIAEGECAK (176 aa)) folds into the MAM domain. The GPI-anchor amidated aspartate moiety is linked to residue Asp-931. Positions 932-956 (GAVGILVHIWLFPIIVLISILSPRR) are cleaved as a propeptide — removed in mature form.

In terms of assembly, interacts (through the Ig-like domains) with NLGN2. Detected in Leydig cells, syncytiotrophoblast, duodenal villi epithelial cells and neutrophils from kidney and cutaneous squamous cell carcinoma (at protein level).

It localises to the cell membrane. May be involved in cell-cell interactions. The polypeptide is MAM domain-containing glycosylphosphatidylinositol anchor protein 2 (MDGA2) (Homo sapiens (Human)).